A 250-amino-acid polypeptide reads, in one-letter code: Flavin-dependent thymidylate synthase (250 aa).

One can recognise a ThyX domain in the interval 7 to 233 (LRVQLIAKTE…PQVFSDFEIT (227 aa)). Residues Ser-71, 95–97 (RHR), and Gln-103 each bind FAD. DUMP-binding positions include 92 to 95 (ELIR), 103 to 107 (QLSQR), and Arg-172. The ThyX motif signature appears at 95-105 (RHRHFSYSQLS). FAD is bound by residues 188 to 190 (NYR) and His-194. Arg-199 provides a ligand contact to dUMP. Arg-199 acts as the Involved in ionization of N3 of dUMP, leading to its activation in catalysis.

This sequence belongs to the thymidylate synthase ThyX family. Homotetramer. The cofactor is FAD.

It carries out the reaction dUMP + (6R)-5,10-methylene-5,6,7,8-tetrahydrofolate + NADPH + H(+) = dTMP + (6S)-5,6,7,8-tetrahydrofolate + NADP(+). It functions in the pathway pyrimidine metabolism; dTTP biosynthesis. Functionally, catalyzes the reductive methylation of 2'-deoxyuridine-5'-monophosphate (dUMP) to 2'-deoxythymidine-5'-monophosphate (dTMP) while utilizing 5,10-methylenetetrahydrofolate (mTHF) as the methyl donor, and NADPH and FADH(2) as the reductant. The polypeptide is Flavin-dependent thymidylate synthase (Mycolicibacterium gilvum (strain PYR-GCK) (Mycobacterium gilvum (strain PYR-GCK))).